The chain runs to 607 residues: 1-deoxy-D-xylulose-5-phosphate synthase (607 aa).

Residues His-63 and 104 to 106 contribute to the thiamine diphosphate site; that span reads GHS. Asp-135 contacts Mg(2+). Residues 136–137, Asn-164, Tyr-271, and Glu-351 contribute to the thiamine diphosphate site; that span reads GA. Asn-164 contacts Mg(2+).

The protein belongs to the transketolase family. DXPS subfamily. As to quaternary structure, homodimer. Mg(2+) serves as cofactor. It depends on thiamine diphosphate as a cofactor.

The enzyme catalyses D-glyceraldehyde 3-phosphate + pyruvate + H(+) = 1-deoxy-D-xylulose 5-phosphate + CO2. It functions in the pathway metabolic intermediate biosynthesis; 1-deoxy-D-xylulose 5-phosphate biosynthesis; 1-deoxy-D-xylulose 5-phosphate from D-glyceraldehyde 3-phosphate and pyruvate: step 1/1. Its function is as follows. Catalyzes the acyloin condensation reaction between C atoms 2 and 3 of pyruvate and glyceraldehyde 3-phosphate to yield 1-deoxy-D-xylulose-5-phosphate (DXP). This is 1-deoxy-D-xylulose-5-phosphate synthase from Campylobacter hominis (strain ATCC BAA-381 / DSM 21671 / CCUG 45161 / LMG 19568 / NCTC 13146 / CH001A).